The following is a 471-amino-acid chain: UDP-N-acetylmuramate--L-alanine ligase (471 aa).

125 to 131 (GTHGKTT) serves as a coordination point for ATP.

Belongs to the MurCDEF family.

Its subcellular location is the cytoplasm. It catalyses the reaction UDP-N-acetyl-alpha-D-muramate + L-alanine + ATP = UDP-N-acetyl-alpha-D-muramoyl-L-alanine + ADP + phosphate + H(+). The protein operates within cell wall biogenesis; peptidoglycan biosynthesis. Cell wall formation. This Kineococcus radiotolerans (strain ATCC BAA-149 / DSM 14245 / SRS30216) protein is UDP-N-acetylmuramate--L-alanine ligase.